The sequence spans 145 residues: D-aminoacyl-tRNA deacylase (145 aa).

The Gly-cisPro motif, important for rejection of L-amino acids signature appears at 137–138 (GP).

This sequence belongs to the DTD family. In terms of assembly, homodimer.

It localises to the cytoplasm. It carries out the reaction glycyl-tRNA(Ala) + H2O = tRNA(Ala) + glycine + H(+). The enzyme catalyses a D-aminoacyl-tRNA + H2O = a tRNA + a D-alpha-amino acid + H(+). In terms of biological role, an aminoacyl-tRNA editing enzyme that deacylates mischarged D-aminoacyl-tRNAs. Also deacylates mischarged glycyl-tRNA(Ala), protecting cells against glycine mischarging by AlaRS. Acts via tRNA-based rather than protein-based catalysis; rejects L-amino acids rather than detecting D-amino acids in the active site. By recycling D-aminoacyl-tRNA to D-amino acids and free tRNA molecules, this enzyme counteracts the toxicity associated with the formation of D-aminoacyl-tRNA entities in vivo and helps enforce protein L-homochirality. This is D-aminoacyl-tRNA deacylase from Azotobacter vinelandii (strain DJ / ATCC BAA-1303).